The primary structure comprises 493 residues: MTDLIRSDAATLAAKIAAKEVSATELTQACLDQIEATDDRYHAFLHIGAHEALSAAAAVDTALAAGERLPSALAGVPLALKDVFTTVDMPTTCGSKILEGWRSPYDATLTLRLRAAGIPILGKTNMDEFAMGSSTENSAYGPTRNPWNLDRVPGGSGGGSAAALAAYQAPLAIGSDTGGSIRQPAALTATVGVKPTYGTVSRYGLVACASSLDQGGPCARTVLDTAMLHQVIAGHDAKDSTSLETEIPDVVGAAKAGASGDLRGVRIGVVKQLRGDGYQPGVLASFEAAVAQLTALGAEVSEVDCPHFDHALAAYYLILPSEVSSNLARFDAMRYGLRIGDDGTHSAEEVMAMTRAAGFGPEVKRRIMIGAYALSAGYYDAYYNQAQKIRTLIARDLDEAYQSVDVLVSPATPTTAFPLGEKVDDPLAMYLFDLCTLPLNLAGHCGMSVPSGLSPDDGLPVGLQIMAPALADDRLYRVGAAYEAARGPLPSAI.

Residues K81 and S156 each act as charge relay system in the active site. S180 functions as the Acyl-ester intermediate in the catalytic mechanism.

Belongs to the amidase family. GatA subfamily. Heterotrimer of A, B and C subunits.

It catalyses the reaction L-glutamyl-tRNA(Gln) + L-glutamine + ATP + H2O = L-glutaminyl-tRNA(Gln) + L-glutamate + ADP + phosphate + H(+). In terms of biological role, allows the formation of correctly charged Gln-tRNA(Gln) through the transamidation of misacylated Glu-tRNA(Gln) in organisms which lack glutaminyl-tRNA synthetase. The reaction takes place in the presence of glutamine and ATP through an activated gamma-phospho-Glu-tRNA(Gln). The chain is Glutamyl-tRNA(Gln) amidotransferase subunit A from Mycobacterium ulcerans (strain Agy99).